We begin with the raw amino-acid sequence, 345 residues long: S-adenosylmethionine:tRNA ribosyltransferase-isomerase (345 aa).

This sequence belongs to the QueA family. Monomer.

It localises to the cytoplasm. It carries out the reaction 7-aminomethyl-7-carbaguanosine(34) in tRNA + S-adenosyl-L-methionine = epoxyqueuosine(34) in tRNA + adenine + L-methionine + 2 H(+). Its pathway is tRNA modification; tRNA-queuosine biosynthesis. In terms of biological role, transfers and isomerizes the ribose moiety from AdoMet to the 7-aminomethyl group of 7-deazaguanine (preQ1-tRNA) to give epoxyqueuosine (oQ-tRNA). This is S-adenosylmethionine:tRNA ribosyltransferase-isomerase from Shewanella loihica (strain ATCC BAA-1088 / PV-4).